The primary structure comprises 448 residues: N-succinylarginine dihydrolase (448 aa).

Substrate is bound by residues 19 to 28, Asn110, and 137 to 138; these read GGLSYGNVAS and HR. The active site involves Glu174. Arg214 contacts substrate. His250 is a catalytic residue. 2 residues coordinate substrate: Asp252 and Asn365. Cys371 (nucleophile) is an active-site residue.

The protein belongs to the succinylarginine dihydrolase family. As to quaternary structure, homodimer.

The enzyme catalyses N(2)-succinyl-L-arginine + 2 H2O + 2 H(+) = N(2)-succinyl-L-ornithine + 2 NH4(+) + CO2. Its pathway is amino-acid degradation; L-arginine degradation via AST pathway; L-glutamate and succinate from L-arginine: step 2/5. Functionally, catalyzes the hydrolysis of N(2)-succinylarginine into N(2)-succinylornithine, ammonia and CO(2). This chain is N-succinylarginine dihydrolase, found in Pseudomonas fluorescens (strain Pf0-1).